The sequence spans 355 residues: Peptide chain release factor 1 (355 aa).

Gln-231 carries the post-translational modification N5-methylglutamine. Basic and acidic residues predominate over residues 280-291 (SERLAKESEARK). The disordered stretch occupies residues 280–303 (SERLAKESEARKSQVGSGDRSERI).

Belongs to the prokaryotic/mitochondrial release factor family. Post-translationally, methylated by PrmC. Methylation increases the termination efficiency of RF1.

It localises to the cytoplasm. Functionally, peptide chain release factor 1 directs the termination of translation in response to the peptide chain termination codons UAG and UAA. The chain is Peptide chain release factor 1 from Campylobacter jejuni (strain RM1221).